The primary structure comprises 148 residues: NADPH-dependent 7-cyano-7-deazaguanine reductase (148 aa).

Catalysis depends on cysteine 50, which acts as the Thioimide intermediate. Aspartate 57 functions as the Proton donor in the catalytic mechanism. Residues 72–74 (VES) and 91–92 (HE) contribute to the substrate site.

Belongs to the GTP cyclohydrolase I family. QueF type 1 subfamily.

The protein localises to the cytoplasm. The catalysed reaction is 7-aminomethyl-7-carbaguanine + 2 NADP(+) = 7-cyano-7-deazaguanine + 2 NADPH + 3 H(+). Its pathway is tRNA modification; tRNA-queuosine biosynthesis. Catalyzes the NADPH-dependent reduction of 7-cyano-7-deazaguanine (preQ0) to 7-aminomethyl-7-deazaguanine (preQ1). This chain is NADPH-dependent 7-cyano-7-deazaguanine reductase, found in Helicobacter pylori (strain G27).